Reading from the N-terminus, the 215-residue chain is 3-isopropylmalate dehydratase small subunit (215 aa).

The protein belongs to the LeuD family. LeuD type 1 subfamily. Heterodimer of LeuC and LeuD.

It carries out the reaction (2R,3S)-3-isopropylmalate = (2S)-2-isopropylmalate. Its pathway is amino-acid biosynthesis; L-leucine biosynthesis; L-leucine from 3-methyl-2-oxobutanoate: step 2/4. Its function is as follows. Catalyzes the isomerization between 2-isopropylmalate and 3-isopropylmalate, via the formation of 2-isopropylmaleate. This chain is 3-isopropylmalate dehydratase small subunit, found in Polynucleobacter asymbioticus (strain DSM 18221 / CIP 109841 / QLW-P1DMWA-1) (Polynucleobacter necessarius subsp. asymbioticus).